Reading from the N-terminus, the 122-residue chain is Basic phospholipase A2 Cdr-12 (122 aa).

Disulfide bonds link C26/C115, C28/C44, C43/C95, C49/C122, C50/C88, C57/C81, and C75/C86. Ca(2+) is bound by residues Y27, G29, and G31. Residue H47 is part of the active site. D48 contributes to the Ca(2+) binding site. D89 is a catalytic residue.

Requires Ca(2+) as cofactor. In terms of tissue distribution, expressed by the venom gland.

It localises to the secreted. The enzyme catalyses a 1,2-diacyl-sn-glycero-3-phosphocholine + H2O = a 1-acyl-sn-glycero-3-phosphocholine + a fatty acid + H(+). Functionally, snake venom phospholipase A2 (PLA2) that induces myonecrosis and edema upon intramuscular injections in mice. In vitro, causes a potent blockade of neuromuscular transmission in young chicken biventer cervicis preparation and produces cytotoxicity in murine C2C12 skeletal muscle myotubes and lack cytolytic activity upon myoblasts in vitro. PLA2 catalyzes the calcium-dependent hydrolysis of the 2-acyl groups in 3-sn-phosphoglycerides. This chain is Basic phospholipase A2 Cdr-12, found in Crotalus durissus ruruima (South American rattlesnake).